Reading from the N-terminus, the 150-residue chain is MKARGPFCIRHAAADTFAMVVFCFVTGMIIEIFVSGMTFQQSLASRTLSIPVNIAIAWPYGVFRDYVLRQGRKISPTGWMKNLSDLVAYVLFQSPVYAAILFTVGASTDQIITAVATNALVSCGMGVLYGYFLDMCRRWFKVPGYTVSEG.

4 helical membrane-spanning segments follow: residues 17–37 (FAMV…VSGM), 48–68 (LSIP…DYVL), 86–106 (LVAY…TVGA), and 111–131 (IITA…LYGY).

This sequence belongs to the AlaE exporter family.

It localises to the cell inner membrane. Functionally, exports L-alanine. This chain is L-alanine exporter AlaE, found in Vibrio cholerae serotype O1 (strain ATCC 39315 / El Tor Inaba N16961).